A 282-amino-acid chain; its full sequence is Biotin synthase (282 aa).

In terms of domain architecture, Radical SAM core spans Met-1 to Arg-230. [4Fe-4S] cluster contacts are provided by Cys-19, Cys-23, and Cys-26. Cys-63, Cys-98, and Cys-156 together coordinate [2Fe-2S] cluster.

The protein belongs to the radical SAM superfamily. Biotin synthase family. Homodimer. The cofactor is [4Fe-4S] cluster. [2Fe-2S] cluster is required as a cofactor.

The enzyme catalyses (4R,5S)-dethiobiotin + (sulfur carrier)-SH + 2 reduced [2Fe-2S]-[ferredoxin] + 2 S-adenosyl-L-methionine = (sulfur carrier)-H + biotin + 2 5'-deoxyadenosine + 2 L-methionine + 2 oxidized [2Fe-2S]-[ferredoxin]. Its pathway is cofactor biosynthesis; biotin biosynthesis; biotin from 7,8-diaminononanoate: step 2/2. Functionally, catalyzes the conversion of dethiobiotin (DTB) to biotin by the insertion of a sulfur atom into dethiobiotin via a radical-based mechanism. In Aliarcobacter butzleri (strain RM4018) (Arcobacter butzleri), this protein is Biotin synthase.